Consider the following 840-residue polypeptide: Lysine-specific demethylase JMJ27 (840 aa).

Residues 1-10 (MEKMRGKRIR) show a composition bias toward basic residues. The disordered stretch occupies residues 1 to 52 (MEKMRGKRIRPRDSGELVEDGRSESERKTRKKENDVVSKGRIGRGRGRGEVS). Residues 11 to 38 (PRDSGELVEDGRSESERKTRKKENDVVS) show a composition bias toward basic and acidic residues. 8 residues coordinate Zn(2+): Cys80, Cys83, Cys95, Cys98, Cys104, Cys107, Cys124, and Cys127. The RING-type; degenerate zinc finger occupies 80–127 (CHHCKILTSESDLIFCSKCNKKCYCFDCIKRSYSERTHEEVRAACPFC). The 297-residue stretch at 502–798 (PKSGILNLAT…ECLRLTQEFR (297 aa)) folds into the JmjC domain. His546 and Asp548 together coordinate Fe cation. The segment at 594–678 (KEASELENKS…ETDGNTNERS (85 aa)) is disordered. The segment covering 595–620 (EASELENKSMKEVDESKKDLKDKAAN) has biased composition (basic and acidic residues). Residues 621–631 (EEQSNNSSRPS) show a composition bias toward polar residues. Basic and acidic residues predominate over residues 635–646 (EAEKVIISKEDN). A compositionally biased stretch (polar residues) spans 647–659 (PTQPAVSTSVESI). The segment covering 660–678 (QEQKLDAPKETDGNTNERS) has biased composition (basic and acidic residues). Residue His766 coordinates Fe cation.

This sequence belongs to the JARID1 histone demethylase family. Interacts with RPN1A. Fe(2+) is required as a cofactor. As to expression, expressed in seedlings, inflorescences, flowers and siliques, and, at low levels, in roots, leaves (including vascular bundles) and stems. Particularly observed in stomatal guard cells.

Its subcellular location is the nucleus. The protein resides in the cytoplasm. It catalyses the reaction N(6),N(6)-dimethyl-L-lysyl(9)-[histone H3] + 2-oxoglutarate + O2 = N(6)-methyl-L-lysyl(9)-[histone H3] + formaldehyde + succinate + CO2. The enzyme catalyses N(6)-methyl-L-lysyl(9)-[histone H3] + 2-oxoglutarate + O2 = L-lysyl(9)-[histone H3] + formaldehyde + succinate + CO2. It carries out the reaction N(6),N(6)-dimethyl-L-lysyl(9)-[histone H3] + 2 2-oxoglutarate + 2 O2 = L-lysyl(9)-[histone H3] + 2 formaldehyde + 2 succinate + 2 CO2. In terms of biological role, histone demethylase that demethylates 'Lys-9' (H3K9me) of histone H3 with a specific activity for H3K9me1 and H3K9me2. No activity on H3K4, H3K27, H3K36, H3R2 and H4R3 methyl marks, but weak activity on H3K9me3. Involved in regulation of gene expression. Regulates flowering time by repressing the major flowering regulator CONSTANS (CO) and promoting FLOWERING LOCUS C (FLC). Exhibits a positive impact on abscisic acid- (ABA), hydrogen peroxide- (H(2)O(2)) and calcium- (Ca(2+)) induced stomatal closure. Promotes stomatal-closure-dependent drought-stress responses through its histone demethylase activity toward at least GOLS2 and RD20 loci, thus protecting them from silencing by removing H3K9me2 marks in drought conditions. Required for plant defenses leading to resistance against the virulent bacterial pathogen Pseudomonas syringae pv. tomato DC3000 (Pst DC3000) via a negative regulation of WRKY25 (a repressor of defense) and by triggering the expression of several pathogenesis-related (PR) proteins (e.g. PR1, PR3, PR4 and PR5). This Arabidopsis thaliana (Mouse-ear cress) protein is Lysine-specific demethylase JMJ27.